The following is a 354-amino-acid chain: Methylthioribose-1-phosphate isomerase (354 aa).

D246 serves as the catalytic Proton donor.

Belongs to the eIF-2B alpha/beta/delta subunits family. MtnA subfamily.

The protein localises to the cytoplasm. The protein resides in the nucleus. The catalysed reaction is 5-(methylsulfanyl)-alpha-D-ribose 1-phosphate = 5-(methylsulfanyl)-D-ribulose 1-phosphate. Its pathway is amino-acid biosynthesis; L-methionine biosynthesis via salvage pathway; L-methionine from S-methyl-5-thio-alpha-D-ribose 1-phosphate: step 1/6. Functionally, catalyzes the interconversion of methylthioribose-1-phosphate (MTR-1-P) into methylthioribulose-1-phosphate (MTRu-1-P). This is Methylthioribose-1-phosphate isomerase (mri1) from Xenopus laevis (African clawed frog).